A 181-amino-acid polypeptide reads, in one-letter code: Beta-lactoglobulin-2 (181 aa).

An N-terminal signal peptide occupies residues 1–18 (MKCLLLALGLSLMCGNQA). Disulfide bonds link Cys84-Cys179 and Cys124-Cys138.

It belongs to the calycin superfamily. Lipocalin family. In terms of assembly, monomer.

The protein resides in the secreted. Its function is as follows. Lactoglobulin is the primary component of whey, it binds retinol and is probably involved in the transport of that molecule. The polypeptide is Beta-lactoglobulin-2 (LGB2) (Equus caballus (Horse)).